The primary structure comprises 347 residues: Protein RecA (347 aa).

68–75 serves as a coordination point for ATP; that stretch reads GPESSGKT.

The protein belongs to the RecA family.

The protein resides in the cytoplasm. Can catalyze the hydrolysis of ATP in the presence of single-stranded DNA, the ATP-dependent uptake of single-stranded DNA by duplex DNA, and the ATP-dependent hybridization of homologous single-stranded DNAs. It interacts with LexA causing its activation and leading to its autocatalytic cleavage. The polypeptide is Protein RecA (Rhodococcus jostii (strain RHA1)).